Here is a 494-residue protein sequence, read N- to C-terminus: Alpha-amylase-related protein (494 aa).

A signal peptide spans 1-20; it reads MFKFASAVILCLVAASSTQA. Gln-21 is modified (pyrrolidone carboxylic acid). Residues Cys-48 and Cys-104 are joined by a disulfide bond. Positions 118, 169, and 178 each coordinate Ca(2+). A disulfide bridge connects residues Cys-157 and Cys-171. Residue Arg-206 coordinates chloride. Asp-208 functions as the Nucleophile in the catalytic mechanism. His-212 is a binding site for Ca(2+). The active-site Proton donor is the Glu-245. The chloride site is built by Asn-308 and Arg-343. Intrachain disulfides connect Cys-376/Cys-382, Cys-418/Cys-441, and Cys-448/Cys-460.

It belongs to the glycosyl hydrolase 13 family. In terms of assembly, monomer. It depends on Ca(2+) as a cofactor. The cofactor is chloride.

The protein localises to the secreted. It catalyses the reaction Endohydrolysis of (1-&gt;4)-alpha-D-glucosidic linkages in polysaccharides containing three or more (1-&gt;4)-alpha-linked D-glucose units.. This is Alpha-amylase-related protein (Amyrel) from Drosophila ercepeae (Fruit fly).